Here is a 411-residue protein sequence, read N- to C-terminus: O-glucosyltransferase rumi (411 aa).

An N-terminal signal peptide occupies residues 1 to 20 (MLINHLIVVLLISLVGTGGA). Cystine bridges form between Cys64-Cys75, Cys73-Cys378, Cys120-Cys126, and Cys282-Cys305. Catalysis depends on Asp151, which acts as the Proton donor/acceptor. The interaction with the consensus sequence C-X-S-X-[PA]-C in peptide substrates stretch occupies residues 192–197 (ATKLHP). UDP-alpha-D-glucose contacts are provided by residues 229–233 (RGSRT), Arg237, 276–278 (VSF), and 294–298 (AASFR). A Prevents secretion from ER motif is present at residues 408–411 (KDEL).

This sequence belongs to the glycosyltransferase 90 family.

It localises to the endoplasmic reticulum lumen. It participates in protein modification; protein glycosylation. Functionally, protein O-glucosyltransferase. Catalyzes the reaction that attaches glucose through an O-glycosidic linkage to a conserved serine residue found in the consensus sequence C-X-S-X-[PA]-C in epidermal growth factor-like repeats. Regulates Notch signaling by glucosylating Notch in the ER, glucosylation is required for the correct folding and cleavage of Notch. This chain is O-glucosyltransferase rumi, found in Drosophila melanogaster (Fruit fly).